The chain runs to 701 residues: Polyribonucleotide nucleotidyltransferase (701 aa).

The Mg(2+) site is built by Asp-485 and Asp-491. Positions 552-611 (PKIFKTTVDPEKIRDIIGPGGKMINKIIAKTNVKIDIEPDGRIFVAAPDDISGNRAISMI) constitute a KH domain. One can recognise an S1 motif domain in the interval 621 to 689 (GQFFLGKVTR…RLGRIALSRK (69 aa)).

This sequence belongs to the polyribonucleotide nucleotidyltransferase family. It depends on Mg(2+) as a cofactor.

The protein localises to the cytoplasm. It carries out the reaction RNA(n+1) + phosphate = RNA(n) + a ribonucleoside 5'-diphosphate. Its function is as follows. Involved in mRNA degradation. Catalyzes the phosphorolysis of single-stranded polyribonucleotides processively in the 3'- to 5'-direction. The chain is Polyribonucleotide nucleotidyltransferase from Caldicellulosiruptor saccharolyticus (strain ATCC 43494 / DSM 8903 / Tp8T 6331).